The sequence spans 381 residues: ELMO domain-containing protein 3 (381 aa).

The span at 1-17 (MNENFHSFHEKELRDGQ) shows a compositional bias: basic and acidic residues. The disordered stretch occupies residues 1-31 (MNENFHSFHEKELRDGQVESVSAGSSPPCDK). In terms of domain architecture, ELMO spans 170–324 (MHGRVLQTIY…DLEMSAKKSP (155 aa)).

It is found in the cell projection. Its subcellular location is the stereocilium. It localises to the kinocilium. The protein localises to the cytoplasm. The protein resides in the cytoskeleton. Functionally, acts as a GTPase-activating protein (GAP) for ARL2 with low specific activity. The protein is ELMO domain-containing protein 3 (ELMOD3) of Bos taurus (Bovine).